The sequence spans 309 residues: Porphobilinogen deaminase (309 aa).

Residue Cys-241 is modified to S-(dipyrrolylmethanemethyl)cysteine.

The protein belongs to the HMBS family. In terms of assembly, monomer. Requires dipyrromethane as cofactor.

It carries out the reaction 4 porphobilinogen + H2O = hydroxymethylbilane + 4 NH4(+). It functions in the pathway porphyrin-containing compound metabolism; protoporphyrin-IX biosynthesis; coproporphyrinogen-III from 5-aminolevulinate: step 2/4. Functionally, tetrapolymerization of the monopyrrole PBG into the hydroxymethylbilane pre-uroporphyrinogen in several discrete steps. This Bacillus anthracis (strain A0248) protein is Porphobilinogen deaminase.